The chain runs to 533 residues: Retinoic acid receptor RXR-beta (533 aa).

The tract at residues M1 to G23 is disordered. Residues M1 to L204 are modulating. R25 bears the Omega-N-methylarginine mark. Residues W36 to P181 form a disordered region. A compositionally biased stretch (low complexity) spans A46 to P61. Basic and acidic residues predominate over residues E67–S82. Pro residues-rich tracts occupy residues N89–T109 and A118–S131. Positions P132–P143 are enriched in low complexity. The span at G144–F153 shows a compositional bias: pro residues. 2 consecutive NR C4-type zinc fingers follow at residues C205–C225 and C241–C265. The segment at residues C205–M270 is a DNA-binding region (nuclear receptor). Positions K271–A295 are hinge. The segment covering Q276–D288 has biased composition (basic and acidic residues). 2 disordered regions span residues Q276–M299 and Q313–V336. The region spanning P296–P529 is the NR LBD domain. The span at E320–G329 shows a compositional bias: gly residues.

This sequence belongs to the nuclear hormone receptor family. NR2 subfamily. As to quaternary structure, homodimer (in vitro). Heterodimer with other retinoic acid receptor family members. Binds DNA preferentially as a RAR/RXR heterodimer. Interacts with NR1H3. Interacts with AKAP13. As to expression, expressed in aortic endothelial cells (at protein level). Expressed in monocytes. Expressed in a variety of tumor cell lines.

Its subcellular location is the nucleus. It localises to the cytoplasm. In terms of biological role, receptor for retinoic acid. Retinoic acid receptors bind as heterodimers to their target response elements in response to their ligands, all-trans or 9-cis retinoic acid, and regulate gene expression in various biological processes. The RAR/RXR heterodimers bind to the retinoic acid response elements (RARE). This chain is Retinoic acid receptor RXR-beta (RXRB), found in Homo sapiens (Human).